The chain runs to 464 residues: Glutamate--tRNA ligase (464 aa).

Residues 9–19 (PSPTGYLHIGG) carry the 'HIGH' region motif. The 'KMSKS' region signature appears at 242–246 (KISKR). Position 245 (Lys245) interacts with ATP.

The protein belongs to the class-I aminoacyl-tRNA synthetase family. Glutamate--tRNA ligase type 1 subfamily. Monomer.

It is found in the cytoplasm. It catalyses the reaction tRNA(Glu) + L-glutamate + ATP = L-glutamyl-tRNA(Glu) + AMP + diphosphate. In terms of biological role, catalyzes the attachment of glutamate to tRNA(Glu) in a two-step reaction: glutamate is first activated by ATP to form Glu-AMP and then transferred to the acceptor end of tRNA(Glu). The sequence is that of Glutamate--tRNA ligase from Neisseria gonorrhoeae (strain ATCC 700825 / FA 1090).